The primary structure comprises 596 residues: PDZ and LIM domain protein 5 (596 aa).

An N-acetylserine modification is found at Ser-2. Position 2 is a phosphoserine (Ser-2). The PDZ domain maps to 2 to 85 (SNYSVSLVGP…SLNMTLQRAS (84 aa)). Residue Lys-89 is modified to N6-acetyllysine; alternate. At Lys-89 the chain carries N6-succinyllysine; alternate. Residue Lys-89 forms a Glycyl lysine isopeptide (Lys-Gly) (interchain with G-Cter in SUMO2); alternate linkage. A phosphoserine mark is found at Ser-111, Ser-134, and Ser-137. Disordered stretches follow at residues 121–165 (NNMA…SPSP), 196–240 (AGKT…GPPR), and 255–340 (THSD…RPGV). Residues 134–143 (SVSSPKVTSI) show a composition bias toward polar residues. Residues 144–165 (PSPSSAFTPAHATTSSHASPSP) show a composition bias toward low complexity. 2 stretches are compositionally biased toward polar residues: residues 205–219 (RQPT…TSQE) and 226–237 (RGSQGDSKQQNG). Phosphoserine is present on residues Ser-228 and Ser-260. 2 stretches are compositionally biased toward basic and acidic residues: residues 258–273 (DASK…DWRP) and 293–304 (EHLKESEADNTK). Residues 305-335 (KANNSQEPSPQLASSVASTRSMPESLDSPTS) show a composition bias toward polar residues. 3 positions are modified to phosphoserine: Ser-309, Ser-313, and Ser-322. Lys-350 is subject to N6-acetyllysine. A disordered region spans residues 354–381 (STGVIKSPSWQRPNQGVPSTGRISNSAT). Residues Ser-360 and Ser-362 each carry the phosphoserine modification. Positions 361–381 (PSWQRPNQGVPSTGRISNSAT) are enriched in polar residues. LIM zinc-binding domains are found at residues 418 to 477 (PMCA…FFAP), 477 to 536 (PECG…LFGT), and 536 to 596 (TICH…SVNF).

Interacts with various PKC isoforms through the LIM domains. Interacts with actin and alpha-actinin through the PDZ domain. Interacts (via LIM domains) with SIPA1L1/SPAR; this interaction may occur preferentially with isoform 1. Heart and skeletal muscle specific. Expression is commonly increased in the brain of patients with bipolar disorder, schizophrenia, and major depression.

It is found in the postsynaptic density. The protein resides in the presynapse. It localises to the postsynapse. Its subcellular location is the cytoplasm. The protein localises to the cytosol. Functionally, may play an important role in the heart development by scaffolding PKC to the Z-disk region. May play a role in the regulation of cardiomyocyte expansion. Isoforms lacking the LIM domains may negatively modulate the scaffolding activity of isoform 1. Overexpression promotes the development of heart hypertrophy. Contributes to the regulation of dendritic spine morphogenesis in neurons. May be required to restrain postsynaptic growth of excitatory synapses. Isoform 1, but not isoform 2, expression favors spine thinning and elongation. This is PDZ and LIM domain protein 5 from Homo sapiens (Human).